The primary structure comprises 270 residues: Methylthioribulose-1-phosphate dehydratase (270 aa).

Cys-122 serves as a coordination point for substrate. Zn(2+) contacts are provided by His-140 and His-142. The Proton donor/acceptor role is filled by Glu-165. Residue His-230 participates in Zn(2+) binding.

It belongs to the aldolase class II family. MtnB subfamily. The cofactor is Zn(2+).

It is found in the cytoplasm. The enzyme catalyses 5-(methylsulfanyl)-D-ribulose 1-phosphate = 5-methylsulfanyl-2,3-dioxopentyl phosphate + H2O. It functions in the pathway amino-acid biosynthesis; L-methionine biosynthesis via salvage pathway; L-methionine from S-methyl-5-thio-alpha-D-ribose 1-phosphate: step 2/6. Catalyzes the dehydration of methylthioribulose-1-phosphate (MTRu-1-P) into 2,3-diketo-5-methylthiopentyl-1-phosphate (DK-MTP-1-P). This chain is Methylthioribulose-1-phosphate dehydratase, found in Candida albicans (strain WO-1) (Yeast).